The chain runs to 128 residues: Small ribosomal subunit protein eS8 (128 aa).

This sequence belongs to the eukaryotic ribosomal protein eS8 family. In terms of assembly, part of the 30S ribosomal subunit.

The sequence is that of Small ribosomal subunit protein eS8 from Methanococcus vannielii (strain ATCC 35089 / DSM 1224 / JCM 13029 / OCM 148 / SB).